Here is a 960-residue protein sequence, read N- to C-terminus: RNA polymerase II subunit A C-terminal domain phosphatase (960 aa).

Met-1 is modified (N-acetylmethionine). The region spanning 178-341 (HRNRKLVLMV…PPAARETQAR (164 aa)) is the FCP1 homology domain. The disordered stretch occupies residues 331 to 580 (APPAARETQA…EEDTDDDDHL (250 aa)). Residues 439–448 (PGVQPTQGDA) show a composition bias toward polar residues. The segment covering 453–463 (LDFDLSSDSES) has biased composition (acidic residues). Position 530 is a phosphoserine (Ser-530). Residues 547-556 (ESQNSEQSGV) are compositionally biased toward polar residues. Acidic residues predominate over residues 566 to 578 (VGEEEEEDTDDDD). A BRCT domain is found at 619 to 718 (LKSKVLADVA…DKVEEQLFPL (100 aa)). A phosphoserine mark is found at Ser-664 and Ser-730. The residue at position 770 (Lys-770) is an N6-acetyllysine. Disordered regions lie at residues 770–834 (KLIR…MSEA) and 854–948 (DILG…ADEM). Ser-830, Ser-860, and Ser-863 each carry phosphoserine. Over residues 854–864 (DILGEGSDDSD) the composition is skewed to acidic residues. Residues 865-881 (IEKKKPEDQDNEQERAP) show a composition bias toward basic and acidic residues. A compositionally biased stretch (acidic residues) spans 934–947 (SNDDEEGSSSEADE).

As to quaternary structure, homodimer. Interacts with GTF2F1. Interacts with WDR77, SNRPB and SNRNP70. Post-translationally, phosphorylated. In the presence of TFIIF, the phosphorylated form has an increased CTD phosphatase activity. The phosphorylation is required for the physical interaction with GTF2F1.

It localises to the nucleus. The protein resides in the cytoplasm. It is found in the cytoskeleton. The protein localises to the microtubule organizing center. Its subcellular location is the centrosome. It localises to the spindle. The protein resides in the spindle pole. It is found in the midbody. The catalysed reaction is O-phospho-L-seryl-[protein] + H2O = L-seryl-[protein] + phosphate. It carries out the reaction O-phospho-L-threonyl-[protein] + H2O = L-threonyl-[protein] + phosphate. Its function is as follows. Processively dephosphorylates 'Ser-2' and 'Ser-5' of the heptad repeats YSPTSPS in the C-terminal domain of the largest RNA polymerase II subunit. This promotes the activity of RNA polymerase II. Plays a role in the exit from mitosis by dephosphorylating crucial mitotic substrates (USP44, CDC20 and WEE1) that are required for M-phase-promoting factor (MPF)/CDK1 inactivation. This Mus musculus (Mouse) protein is RNA polymerase II subunit A C-terminal domain phosphatase (Ctdp1).